The following is a 1579-amino-acid chain: tRNA (guanosine(18)-2'-O)-methyltransferase TARBP1 (1579 aa).

Position 1 is an N-acetylmethionine (Met1). S-adenosyl-L-homocysteine contacts are provided by Val1501, Gly1524, Ile1544, Gln1546, and Leu1553.

Belongs to the class IV-like SAM-binding methyltransferase superfamily. RNA methyltransferase TrmH family. As to quaternary structure, monomer and homodimer.

The enzyme catalyses guanosine(18) in tRNA + S-adenosyl-L-methionine = 2'-O-methylguanosine(18) in tRNA + S-adenosyl-L-homocysteine + H(+). Functionally, S-adenosyl-L-methionine-dependent 2'-O-ribose methyltransferase that catalyzes the formation of 2'-O-methylguanosine at position 18 (Gm18) in a subset of tRNA. Selectively mediates Gm18 methylation of tRNAGln-TTG/CTG and tRNASer-TGA/GCT. Gm18 modification can enhance the stability of modified tRNAs. The chain is tRNA (guanosine(18)-2'-O)-methyltransferase TARBP1 from Mus musculus (Mouse).